A 373-amino-acid polypeptide reads, in one-letter code: Probable dual-specificity RNA methyltransferase RlmN (373 aa).

The active-site Proton acceptor is Glu-111. The 240-residue stretch at 117–356 (GPGRLTACLS…LRKSYGTSIH (240 aa)) folds into the Radical SAM core domain. Cys-124 and Cys-359 form a disulfide bridge. 3 residues coordinate [4Fe-4S] cluster: Cys-131, Cys-135, and Cys-138. S-adenosyl-L-methionine is bound by residues 183–184 (GE), Ser-216, 239–241 (SLH), and Asn-316. Residue Cys-359 is the S-methylcysteine intermediate of the active site.

This sequence belongs to the radical SAM superfamily. RlmN family. Requires [4Fe-4S] cluster as cofactor.

The protein resides in the cytoplasm. It carries out the reaction adenosine(2503) in 23S rRNA + 2 reduced [2Fe-2S]-[ferredoxin] + 2 S-adenosyl-L-methionine = 2-methyladenosine(2503) in 23S rRNA + 5'-deoxyadenosine + L-methionine + 2 oxidized [2Fe-2S]-[ferredoxin] + S-adenosyl-L-homocysteine. It catalyses the reaction adenosine(37) in tRNA + 2 reduced [2Fe-2S]-[ferredoxin] + 2 S-adenosyl-L-methionine = 2-methyladenosine(37) in tRNA + 5'-deoxyadenosine + L-methionine + 2 oxidized [2Fe-2S]-[ferredoxin] + S-adenosyl-L-homocysteine. Its function is as follows. Specifically methylates position 2 of adenine 2503 in 23S rRNA and position 2 of adenine 37 in tRNAs. This chain is Probable dual-specificity RNA methyltransferase RlmN, found in Chlorobium phaeovibrioides (strain DSM 265 / 1930) (Prosthecochloris vibrioformis (strain DSM 265)).